The sequence spans 967 residues: Phosphoenolpyruvate carboxylase 1 (967 aa).

Phosphoserine is present on Ser11. Catalysis depends on residues His173 and Lys602. Residue Ser704 is modified to Phosphoserine.

The protein belongs to the PEPCase type 1 family. In terms of assembly, homotetramer. Mg(2+) is required as a cofactor. The cofactor is Mn(2+). The phosphorylation of Ser-11 is reversibly promoted by inorganic phosphate (Pi) deprivation. Enhanced activity by phosphorylation at pH 7.3 by lowering Km and sensitivity to inhibition by L-malate and L-aspartate, while enhancing activation by glucose 6-phosphate. Expressed in all plant organs, with higher levels in roots.

The protein localises to the cytoplasm. The enzyme catalyses oxaloacetate + phosphate = phosphoenolpyruvate + hydrogencarbonate. By light-reversible phosphorylation. Activated by inorganic phosphate (Pi) deprivation and glucose 6-phosphate. Inhibited by L-malate and L-aspartate. Through the carboxylation of phosphoenolpyruvate (PEP) it forms oxaloacetate, a four-carbon dicarboxylic acid source for the tricarboxylic acid cycle. Contributes probably to the adaptation to inorganic phosphate (Pi) deprivation. The polypeptide is Phosphoenolpyruvate carboxylase 1 (PPC1) (Arabidopsis thaliana (Mouse-ear cress)).